The chain runs to 52 residues: Large ribosomal subunit protein bL33 (52 aa).

It belongs to the bacterial ribosomal protein bL33 family.

This chain is Large ribosomal subunit protein bL33, found in Campylobacter jejuni subsp. doylei (strain ATCC BAA-1458 / RM4099 / 269.97).